Reading from the N-terminus, the 549-residue chain is Cation/acetate symporter ActP (549 aa).

13 helical membrane passes run 33–53, 77–97, 103–123, 148–168, 183–203, 206–226, 262–282, 303–323, 355–375, 404–424, 428–448, 464–484, and 493–513; these read WQAIIMFLIFVVFTLGITYWA, LAIAGDYMSAASFLGISALVF, GLIYSLGFLVGWPIILFLIAE, ILSACGSLVVVALYLIAQMVG, IAVVLVGVLMMMYVLFGGMLA, WVQIIKAVLLLFGASFMAFMV, ISALSLGLGLMFGTAGLPHIL, GFMGYFYILTFIIGFGAIMLV, LFLGFISAVAFATILAVVAGL, VSKITVLILGVIAIILGVLFE, IAFMVGLAFAIAASCNFPIIL, GGWLGLITAVVLMILGPTIWV, and IFPYEYPALFSISVAFLGIWF.

This sequence belongs to the sodium:solute symporter (SSF) (TC 2.A.21) family.

The protein localises to the cell inner membrane. Transports acetate. The polypeptide is Cation/acetate symporter ActP (Escherichia coli O6:K15:H31 (strain 536 / UPEC)).